Consider the following 219-residue polypeptide: 3-demethoxyubiquinol 3-hydroxylase (219 aa).

The tract at residues 21-51 (RTLTPGTTQAERTPAHAAPAPDAPEAGTLPS) is disordered. Residues 35–46 (AHAAPAPDAPEA) show a composition bias toward low complexity. Residues glutamate 68, glutamate 98, histidine 101, glutamate 150, glutamate 182, and histidine 185 each coordinate Fe cation.

Belongs to the COQ7 family. Fe cation serves as cofactor.

Its subcellular location is the cell membrane. It carries out the reaction a 5-methoxy-2-methyl-3-(all-trans-polyprenyl)benzene-1,4-diol + AH2 + O2 = a 3-demethylubiquinol + A + H2O. Its pathway is cofactor biosynthesis; ubiquinone biosynthesis. Catalyzes the hydroxylation of 2-nonaprenyl-3-methyl-6-methoxy-1,4-benzoquinol during ubiquinone biosynthesis. This Alcanivorax borkumensis (strain ATCC 700651 / DSM 11573 / NCIMB 13689 / SK2) protein is 3-demethoxyubiquinol 3-hydroxylase.